Consider the following 293-residue polypeptide: Formamidopyrimidine-DNA glycosylase (293 aa).

Proline 2 functions as the Schiff-base intermediate with DNA in the catalytic mechanism. Catalysis depends on glutamate 3, which acts as the Proton donor. The active-site Proton donor; for beta-elimination activity is lysine 58. Residues histidine 104, arginine 123, and lysine 166 each contribute to the DNA site. The FPG-type zinc finger occupies 257–293; that stretch reads QVYDREGEPCRTDGCEGVVKRFVQNGRSTFWCPKCQR. Arginine 283 acts as the Proton donor; for delta-elimination activity in catalysis.

Belongs to the FPG family. In terms of assembly, monomer. It depends on Zn(2+) as a cofactor.

It catalyses the reaction Hydrolysis of DNA containing ring-opened 7-methylguanine residues, releasing 2,6-diamino-4-hydroxy-5-(N-methyl)formamidopyrimidine.. The catalysed reaction is 2'-deoxyribonucleotide-(2'-deoxyribose 5'-phosphate)-2'-deoxyribonucleotide-DNA = a 3'-end 2'-deoxyribonucleotide-(2,3-dehydro-2,3-deoxyribose 5'-phosphate)-DNA + a 5'-end 5'-phospho-2'-deoxyribonucleoside-DNA + H(+). Functionally, involved in base excision repair of DNA damaged by oxidation or by mutagenic agents. Acts as a DNA glycosylase that recognizes and removes damaged bases. Has a preference for oxidized purines, such as 7,8-dihydro-8-oxoguanine (8-oxoG). Has AP (apurinic/apyrimidinic) lyase activity and introduces nicks in the DNA strand. Cleaves the DNA backbone by beta-delta elimination to generate a single-strand break at the site of the removed base with both 3'- and 5'-phosphates. The polypeptide is Formamidopyrimidine-DNA glycosylase (Bradyrhizobium sp. (strain ORS 278)).